The chain runs to 293 residues: Small ribosomal subunit biogenesis GTPase RsgA (293 aa).

The region spanning 63-223 (KNELVRPPIA…VADTPGFSSL (161 aa)) is the CP-type G domain. GTP contacts are provided by residues 112–115 (SKMD) and 166–174 (GQSGVGKSS). C247, C252, H254, and C260 together coordinate Zn(2+).

It belongs to the TRAFAC class YlqF/YawG GTPase family. RsgA subfamily. In terms of assembly, monomer. Associates with 30S ribosomal subunit, binds 16S rRNA. Requires Zn(2+) as cofactor.

It is found in the cytoplasm. Its function is as follows. One of several proteins that assist in the late maturation steps of the functional core of the 30S ribosomal subunit. Helps release RbfA from mature subunits. May play a role in the assembly of ribosomal proteins into the subunit. Circularly permuted GTPase that catalyzes slow GTP hydrolysis, GTPase activity is stimulated by the 30S ribosomal subunit. The sequence is that of Small ribosomal subunit biogenesis GTPase RsgA from Bacillus cereus (strain ATCC 14579 / DSM 31 / CCUG 7414 / JCM 2152 / NBRC 15305 / NCIMB 9373 / NCTC 2599 / NRRL B-3711).